Consider the following 515-residue polypeptide: Cytochrome P450 monooxygenase ptmJ (515 aa).

4 helical membrane passes run 6–26 (LGPF…LFVI), 50–70 (LGVV…LFCV), 82–102 (VFYL…EPVV), and 300–320 (VIIL…LFLH). Residue C449 coordinates heme.

The protein belongs to the cytochrome P450 family. Heme is required as a cofactor.

It localises to the membrane. Its pathway is secondary metabolite biosynthesis. In terms of biological role, cytochrome P450 monooxygenase; part of the gene cluster that mediates the biosynthesis of the indole diterpenes penitrems. The geranylgeranyl diphosphate (GGPP) synthase ptmG catalyzes the first step in penitrem biosynthesis via conversion of farnesyl pyrophosphate and isopentyl pyrophosphate into geranylgeranyl pyrophosphate (GGPP). Condensation of indole-3-glycerol phosphate with GGPP by the prenyl transferase ptmC then forms 3-geranylgeranylindole (3-GGI). Epoxidation by the FAD-dependent monooxygenase ptmM leads to a epoxidized-GGI that is substrate of the terpene cyclase ptmB for cyclization to yield paspaline. Paspaline is subsequently converted to 13-desoxypaxilline by the cytochrome P450 monooxygenase ptmP, the latter being then converted to paxilline by the cytochrome P450 monooxygenase ptmQ. Paxilline is converted to beta-paxitriol via C-10 ketoreduction by the short-chain dehydrogenase ptmH which can be monoprenylated at the C-20 by the indole diterpene prenyltransferase ptmD. A two-step elimination (acetylation and elimination) process performed by the O-acetyltransferase ptmV and ptmI leads to the production of the prenylated form of penijanthine. The FAD-linked oxidoreductase ptmO then converts the prenylated form of penijanthine into PC-M5 which is in turn transformed into PC-M4 by the aromatic dimethylallyltransferase ptmE. Five sequential oxidative transformations performed by the cytochrome P450 monooxygenases ptmK, ptmU, ptmL, ptmN and ptmJ yield the various penitrem compounds. PtmK, ptmU and ptmM are involved in the formation of the key bicyclic ring of penitrem C via the formation of the intermediates secopenitrem D and penitrem D. PtmL catalyzes the epoxidation of penitrem D and C to yield penitrem B and F, respectively. PtmJ catalyzes the last benzylic hydroxylation to convert penitrem B to prenitrem E and penitrem F to penitrem A. The protein is Cytochrome P450 monooxygenase ptmJ of Penicillium ochrochloron.